Reading from the N-terminus, the 207-residue chain is Dephospho-CoA kinase (207 aa).

One can recognise a DPCK domain in the interval 10 to 207; that stretch reads ILGLTGGIGS…FYLTLSGGQS (198 aa). 18–23 contributes to the ATP binding site; sequence GSGKSA.

Belongs to the CoaE family.

The protein resides in the cytoplasm. It carries out the reaction 3'-dephospho-CoA + ATP = ADP + CoA + H(+). Its pathway is cofactor biosynthesis; coenzyme A biosynthesis; CoA from (R)-pantothenate: step 5/5. Catalyzes the phosphorylation of the 3'-hydroxyl group of dephosphocoenzyme A to form coenzyme A. The polypeptide is Dephospho-CoA kinase (Pseudomonas fluorescens (strain Pf0-1)).